A 412-amino-acid polypeptide reads, in one-letter code: Serine hydroxymethyltransferase (412 aa).

Residues leucine 117 and 121-123 contribute to the (6S)-5,6,7,8-tetrahydrofolate site; that span reads GHL. Position 226 is an N6-(pyridoxal phosphate)lysine (lysine 226). (6S)-5,6,7,8-tetrahydrofolate contacts are provided by residues glutamate 242 and 350-352; that span reads SPF.

Belongs to the SHMT family. In terms of assembly, homodimer. Requires pyridoxal 5'-phosphate as cofactor.

The protein resides in the cytoplasm. The enzyme catalyses (6R)-5,10-methylene-5,6,7,8-tetrahydrofolate + glycine + H2O = (6S)-5,6,7,8-tetrahydrofolate + L-serine. Its pathway is one-carbon metabolism; tetrahydrofolate interconversion. The protein operates within amino-acid biosynthesis; glycine biosynthesis; glycine from L-serine: step 1/1. Its function is as follows. Catalyzes the reversible interconversion of serine and glycine with tetrahydrofolate (THF) serving as the one-carbon carrier. Also exhibits THF-independent aldolase activity toward beta-hydroxyamino acids, producing glycine and aldehydes, via a retro-aldol mechanism. The protein is Serine hydroxymethyltransferase of Methanosarcina acetivorans (strain ATCC 35395 / DSM 2834 / JCM 12185 / C2A).